We begin with the raw amino-acid sequence, 160 residues long: Cytochrome b6-f complex subunit 4 (160 aa).

3 consecutive transmembrane segments (helical) span residues 36–56 (ILFTFPICIAGTIGLITGLAI), 95–115 (LLGIACQGAIPLGLMMVPFIE), and 131–151 (AVFLFGTAVTLWLGAGACFPI).

It belongs to the cytochrome b family. PetD subfamily. As to quaternary structure, the 4 large subunits of the cytochrome b6-f complex are cytochrome b6, subunit IV (17 kDa polypeptide, PetD), cytochrome f and the Rieske protein, while the 4 small subunits are PetG, PetL, PetM and PetN. The complex functions as a dimer.

It localises to the cellular thylakoid membrane. Component of the cytochrome b6-f complex, which mediates electron transfer between photosystem II (PSII) and photosystem I (PSI), cyclic electron flow around PSI, and state transitions. In Picosynechococcus sp. (strain ATCC 27264 / PCC 7002 / PR-6) (Agmenellum quadruplicatum), this protein is Cytochrome b6-f complex subunit 4.